A 347-amino-acid chain; its full sequence is Ryncolin-3 (347 aa).

The N-terminal stretch at 1–19 is a signal peptide; it reads MKPWAAFHLIFLVASSVEG. Positions 57–114 constitute a Collagen-like domain; sequence GIPGVPGINGSEGLKGDPGPQGLPGETGFDGIPGVAGPKGDKGDQGDKGDKGDKGDKG. A disordered region spans residues 62 to 115; it reads PGINGSEGLKGDPGPQGLPGETGFDGIPGVAGPKGDKGDQGDKGDKGDKGDKGD. The span at 95-115 shows a compositional bias: basic and acidic residues; that stretch reads KGDKGDQGDKGDKGDKGDKGD. Positions 121–341 constitute a Fibrinogen C-terminal domain; sequence DCPPTDVEVR…YADMKIRPQQ (221 aa). Cystine bridges form between Cys-132–Cys-160 and Cys-284–Cys-297.

It belongs to the ficolin lectin family. Veficolin subfamily. Hydroxylated. In terms of tissue distribution, expressed by the venom duct.

The protein localises to the secreted. In terms of biological role, initiates complement activation and/or interferes in platelet aggregation and/or blood coagulation. This Cerberus rynchops (Dog-faced water snake) protein is Ryncolin-3.